The sequence spans 249 residues: 2,3,4,5-tetrahydropyridine-2,6-dicarboxylate N-acetyltransferase (249 aa).

It belongs to the transferase hexapeptide repeat family. DapH subfamily.

The enzyme catalyses (S)-2,3,4,5-tetrahydrodipicolinate + acetyl-CoA + H2O = L-2-acetamido-6-oxoheptanedioate + CoA. It participates in amino-acid biosynthesis; L-lysine biosynthesis via DAP pathway; LL-2,6-diaminopimelate from (S)-tetrahydrodipicolinate (acetylase route): step 1/3. Its function is as follows. Catalyzes the transfer of an acetyl group from acetyl-CoA to tetrahydrodipicolinate. This Fervidobacterium nodosum (strain ATCC 35602 / DSM 5306 / Rt17-B1) protein is 2,3,4,5-tetrahydropyridine-2,6-dicarboxylate N-acetyltransferase.